Consider the following 362-residue polypeptide: MIDPFQRLARRGLFLFDPETAHGMSIAALKSGLVPACQIAPDPRLRQTIAGLTFENPLGMAAGYDKNAEVPEALLKLGFGFTEIGTVTPKPQSGNPRPRIFRLVEDEAVINRLGFNNEGHEAAFRRLAELTGTGIFGVNIGANKDSEDRIADYVAGIRRFHSVARYFTANISSPNTPGLRDLQARESLAALLSAVLAVRDEMAEKSGRKIPVFLKIAPDLTEEGMDDIAAEALAHPLDGLIVSNTTLSRDGLKDQRQAKEAGGLSGVPLFEKSTAVLARMRKRVGPDLPIIGVGGVSSAETALEKIRAGADLVQLYSCMVYEGPGLPGTIVRGLSALLDREKAGSIRALRDSRLDYWAARKV.

FMN contacts are provided by residues 62–66 (AGYDK) and Thr-86. Lys-66 is a substrate binding site. 111–115 (NRLGF) contacts substrate. Residues Asn-139 and Asn-170 each contribute to the FMN site. Substrate is bound at residue Asn-170. Ser-173 functions as the Nucleophile in the catalytic mechanism. Asn-175 is a substrate binding site. FMN-binding residues include Lys-215 and Ser-243. A substrate-binding site is contributed by 244–245 (NT). FMN is bound by residues Gly-266, Gly-295, and 316-317 (YS).

This sequence belongs to the dihydroorotate dehydrogenase family. Type 2 subfamily. As to quaternary structure, monomer. The cofactor is FMN.

It is found in the cell membrane. The enzyme catalyses (S)-dihydroorotate + a quinone = orotate + a quinol. It functions in the pathway pyrimidine metabolism; UMP biosynthesis via de novo pathway; orotate from (S)-dihydroorotate (quinone route): step 1/1. Its function is as follows. Catalyzes the conversion of dihydroorotate to orotate with quinone as electron acceptor. The protein is Dihydroorotate dehydrogenase (quinone) of Rhizobium etli (strain ATCC 51251 / DSM 11541 / JCM 21823 / NBRC 15573 / CFN 42).